The primary structure comprises 369 residues: UPF0284 protein sll1500 (369 aa).

This sequence belongs to the UPF0284 family.

This chain is UPF0284 protein sll1500, found in Synechocystis sp. (strain ATCC 27184 / PCC 6803 / Kazusa).